The sequence spans 143 residues: uncharacterized protein (143 aa).

A helical membrane pass occupies residues 65 to 85 (LVWMLVGTIVLSLDIIFPALV).

The protein resides in the membrane. This is an uncharacterized protein from Saccharomyces cerevisiae (strain ATCC 204508 / S288c) (Baker's yeast).